The chain runs to 306 residues: MKPTQAILAEILDEVRPLIGQGKVADYIPALARVSNQKLAIAVYTNEGEVIQAGDADEAFSVQSISKALSLTLAMVLYKPEEIWQRVGKEPSGQAFNSMIQLEMEHGIPRNPFINAGAIVVADLLQSRLSAPRHRLLEFVRQLSGDTHIVYDKVVAASEMMHSDRNAAIAYLMRSFGNFENDVIPVLNNYFHACALKMTCVDLAKTFSYLANKGVSVQTKKEIITPVQTKQLNALLATCGLYDGAGEFAYRVGMPGKSGVGGGIIAIVPGEMTIAVWSPELDASGNSLAGTQALELLSERIGRSIF.

Substrate contacts are provided by serine 64, asparagine 115, glutamate 159, asparagine 166, tyrosine 190, tyrosine 242, and valine 260.

The protein belongs to the glutaminase family. As to quaternary structure, homotetramer.

It carries out the reaction L-glutamine + H2O = L-glutamate + NH4(+). In Vibrio atlanticus (strain LGP32) (Vibrio splendidus (strain Mel32)), this protein is Glutaminase.